A 93-amino-acid chain; its full sequence is Small ribosomal subunit protein uS19 (93 aa).

Belongs to the universal ribosomal protein uS19 family.

Functionally, protein S19 forms a complex with S13 that binds strongly to the 16S ribosomal RNA. The protein is Small ribosomal subunit protein uS19 of Nocardia farcinica (strain IFM 10152).